The following is a 77-amino-acid chain: MNNEKNVSFEFIGSTDEVDEIKLLPCAWAGNVCGEKRAYCCSDPGRYCPWQVVCYESSEICSQKCGKMRMNVTKNTI.

Positions methionine 1–lysine 22 are cleaved as a signal peptide. Intrachain disulfides connect cysteine 26–cysteine 61, cysteine 33–cysteine 48, cysteine 40–cysteine 54, and cysteine 41–cysteine 65.

The sequence is that of Pollen allergen Amb p 5a from Ambrosia psilostachya (Western ragweed).